The following is an 86-amino-acid chain: Large ribosomal subunit protein uL23 (86 aa).

It belongs to the universal ribosomal protein uL23 family. As to quaternary structure, part of the 50S ribosomal subunit. Contacts protein L29.

Its function is as follows. Binds to 23S rRNA. One of the proteins that surrounds the polypeptide exit tunnel on the outside of the ribosome. This Aeropyrum pernix (strain ATCC 700893 / DSM 11879 / JCM 9820 / NBRC 100138 / K1) protein is Large ribosomal subunit protein uL23.